Consider the following 644-residue polypeptide: uncharacterized protein (644 aa).

254 to 261 serves as a coordination point for ATP; that stretch reads GKMGAGKS.

This is an uncharacterized protein from Bacillus anthracis.